We begin with the raw amino-acid sequence, 107 residues long: Chlorobenzene dioxygenase, ferredoxin component (107 aa).

The region spanning threonine 4 to valine 99 is the Rieske domain. The [2Fe-2S] cluster site is built by cysteine 43, histidine 45, cysteine 62, and histidine 65.

Belongs to the bacterial ring-hydroxylating dioxygenase ferredoxin component family. In terms of assembly, this dioxygenase system consists of four proteins: the two subunits of the oxygenase component (TecA1 and TecA2), a ferredoxin (TecA3) and a ferredoxin reductase (TecA4). [2Fe-2S] cluster serves as cofactor.

Its pathway is aromatic compound metabolism. Its function is as follows. Part of the chlorobenzene dioxygenase system that catalyzes the dihydroxylation of a range of aromatic compounds, including chlorinated benzenes and toluenes, and dinuclear aromatics such as biphenyl and dibenzo-p-dioxin. The protein is Chlorobenzene dioxygenase, ferredoxin component of Cupriavidus sp. (strain PS12).